Reading from the N-terminus, the 1172-residue chain is Phytochrome B (1172 aa).

Gly residues predominate over residues 1 to 16; that stretch reads MVSGVGGSGGGRGGGR. Residues 1–54 form a disordered region; sequence MVSGVGGSGGGRGGGRGGEEEPSSSHTPNNRRGGEQAQSSGTKSLRPRSNTESM. A compositionally biased stretch (polar residues) spans 24–54; the sequence is SSHTPNNRRGGEQAQSSGTKSLRPRSNTESM. The GAF domain maps to 252–433; it reads DIKLLCDTVV…AFGLQLNMEL (182 aa). Phytochromobilin is bound at residue C357. 2 PAS domains span residues 652-723 and 786-857; these read VARE…LRGD and DYKA…MIVL. The Histidine kinase domain occupies 934-1153; it reads YICQVIKNPL…LIILELPVPR (220 aa).

It belongs to the phytochrome family. As to quaternary structure, homodimer. Interacts with ADO1 and PKS4. Stabilized by interactions with PAPP5 and FYPP3 which are enhanced in the phosphorylated Pfr form. Interacts with VOZ1 and VOZ2. Binds, via its photosensory domain, to PTAC12/HMR/PAP5 when photoactivated; this interaction stimulates its localization to photobodies. Interacts with CRY1 specifically when in the dark/far-red (Pr) state, but not when red light-activated (Pfr). Interacts with PIF4 and PIF5 in response to low blue light (LBL). Component of a red light-dependent nuclear complex made of PHL, PHYB and CO. Interacts directly with PHL. Binds to UNE10/PIF8 when red light-activated (Pfr). When light-activated, interacts with PCH1 and PCHL. Associated with DRT111/RSN2/SFPS, SMP2 and SWAP1 in nuclear photobodies upon response to red light (Pfr form). In terms of processing, contains one covalently linked phytochromobilin chromophore. In terms of tissue distribution, expressed in fruits, flowers, leaves, stems, seedlings and roots.

It localises to the cytoplasm. The protein localises to the nucleus. It is found in the nucleoplasm. The protein resides in the nucleus speckle. In terms of biological role, regulatory photoreceptor which exists in two forms that are reversibly interconvertible by light: the Pr form that absorbs maximally in the red region of the spectrum and the Pfr form that absorbs maximally in the far-red region. Photoconversion of Pr to Pfr induces an array of morphogenetic responses, whereas reconversion of Pfr to Pr cancels the induction of those responses. Pfr controls the expression of a number of nuclear genes including those encoding the small subunit of ribulose-bisphosphate carboxylase, chlorophyll A/B binding protein, protochlorophyllide reductase, rRNA, etc. It also controls the expression of its own gene(s) in a negative feedback fashion. Involved in the flowering time regulation. Involved in light-regulated circadian phase control that triggers stomatal aperture, stomatal conductance, and CO(2) assimilation. Implicated in red light perception, and, to a lower extent, in blue light signaling. Controls thermomorphogenesis in the daytime and regulates temperature responses by associating with the promoters of key target genes in a temperature-dependent manner and subsequently repressing their expression in a PIF4-dependent manner (temperature-responsive transcriptional regulator); this process requires PTAC12/HMR/PAP5 (transcriptional activator). Thermal timer that integrates temperature information over the course of the night. Detabilizes UNE10/PIF8 in red light. In Arabidopsis thaliana (Mouse-ear cress), this protein is Phytochrome B.